Reading from the N-terminus, the 417-residue chain is Serine hydroxymethyltransferase 1 (417 aa).

(6S)-5,6,7,8-tetrahydrofolate-binding positions include leucine 121 and 125–127 (GHL). The residue at position 230 (lysine 230) is an N6-(pyridoxal phosphate)lysine. A (6S)-5,6,7,8-tetrahydrofolate-binding site is contributed by 355–357 (SPF).

It belongs to the SHMT family. In terms of assembly, homodimer. It depends on pyridoxal 5'-phosphate as a cofactor.

The protein resides in the cytoplasm. The catalysed reaction is (6R)-5,10-methylene-5,6,7,8-tetrahydrofolate + glycine + H2O = (6S)-5,6,7,8-tetrahydrofolate + L-serine. It functions in the pathway one-carbon metabolism; tetrahydrofolate interconversion. It participates in amino-acid biosynthesis; glycine biosynthesis; glycine from L-serine: step 1/1. Catalyzes the reversible interconversion of serine and glycine with tetrahydrofolate (THF) serving as the one-carbon carrier. This reaction serves as the major source of one-carbon groups required for the biosynthesis of purines, thymidylate, methionine, and other important biomolecules. Also exhibits THF-independent aldolase activity toward beta-hydroxyamino acids, producing glycine and aldehydes, via a retro-aldol mechanism. The sequence is that of Serine hydroxymethyltransferase 1 from Pseudomonas aeruginosa (strain ATCC 15692 / DSM 22644 / CIP 104116 / JCM 14847 / LMG 12228 / 1C / PRS 101 / PAO1).